The chain runs to 166 residues: SPbeta prophage-derived uncharacterized protein YomO (166 aa).

This chain is SPbeta prophage-derived uncharacterized protein YomO (yomO), found in Bacillus subtilis (strain 168).